Reading from the N-terminus, the 216-residue chain is uncharacterized protein (216 aa).

The helical transmembrane segment at 5-25 threads the bilayer; it reads YVKALVAVTVALGVLLPSTIS. Low complexity-rich tracts occupy residues 28 to 67 and 89 to 108; these read KSFSGRSSSSYSSRSSSSSYSGSYKSSPKSSYSSGSSSSS and KASSSSSKKSSGTFSGATSK. The tract at residues 28-115 is disordered; that stretch reads KSFSGRSSSS…TSKVTGKTYS (88 aa). The next 2 membrane-spanning stretches (helical) occupy residues 137-157 and 183-203; these read GFAPSGWFGYYSGFTMGMFMI and IAWIVDIIALIIILIIVIALI.

The protein resides in the cell membrane. This is an uncharacterized protein from Bacillus subtilis (strain 168).